A 287-amino-acid polypeptide reads, in one-letter code: Large ribosomal subunit protein uL2 (287 aa).

Positions 221–287 (RGSVMNPCDH…SKRSRGGRDS (67 aa)) are disordered. Positions 271–287 (LRKRRKTSKRSRGGRDS) are enriched in basic residues.

The protein belongs to the universal ribosomal protein uL2 family. Part of the 50S ribosomal subunit. Forms a bridge to the 30S subunit in the 70S ribosome.

Functionally, one of the primary rRNA binding proteins. Required for association of the 30S and 50S subunits to form the 70S ribosome, for tRNA binding and peptide bond formation. It has been suggested to have peptidyltransferase activity; this is somewhat controversial. Makes several contacts with the 16S rRNA in the 70S ribosome. This is Large ribosomal subunit protein uL2 from Synechococcus sp. (strain CC9605).